An 883-amino-acid chain; its full sequence is Translation initiation factor IF-2 (883 aa).

Disordered regions lie at residues 53–90 (RSHGKPEQAPEETDQSAKKITLNRRKQQEVTVNSGRSK) and 171–294 (EEAA…FERP). The span at 81–90 (EVTVNSGRSK) shows a compositional bias: polar residues. Low complexity predominate over residues 172–185 (EAAAAAKAAEALAA). Residues 221–238 (RSDDRNNRSAPRNERGPG) are compositionally biased toward basic and acidic residues. Low complexity predominate over residues 256–265 (GNSNNSNNRG). The tr-type G domain maps to 382-551 (QRPPVVTIMG…SVQAELLELK (170 aa)). The interval 391-398 (GHVDHGKT) is G1. Residue 391–398 (GHVDHGKT) coordinates GTP. The interval 416–420 (GITQH) is G2. The tract at residues 437 to 440 (DTPG) is G3. GTP contacts are provided by residues 437 to 441 (DTPGH) and 491 to 494 (NKID). The tract at residues 491–494 (NKID) is G4. Residues 527 to 529 (SAK) are G5.

Belongs to the TRAFAC class translation factor GTPase superfamily. Classic translation factor GTPase family. IF-2 subfamily.

The protein localises to the cytoplasm. One of the essential components for the initiation of protein synthesis. Protects formylmethionyl-tRNA from spontaneous hydrolysis and promotes its binding to the 30S ribosomal subunits. Also involved in the hydrolysis of GTP during the formation of the 70S ribosomal complex. The chain is Translation initiation factor IF-2 from Stenotrophomonas maltophilia (strain R551-3).